The following is a 66-amino-acid chain: KEGYLVNHSTGCKYECFKLGDNDYCLRECKQQYGKGAGGYCYAFGCWCTHLYEQAVVWPLPKKTCN.

In terms of domain architecture, LCN-type CS-alpha/beta spans 1 to 66 (KEGYLVNHST…VWPLPKKTCN (66 aa)). 4 disulfide bridges follow: Cys12–Cys65, Cys16–Cys41, Cys25–Cys46, and Cys29–Cys48.

As to expression, expressed by the venom gland.

It localises to the secreted. In terms of biological role, beta toxins bind voltage-independently at site-4 of sodium channels (Nav) and shift the voltage of activation toward more negative potentials thereby affecting sodium channel activation and promoting spontaneous and repetitive firing. This toxin acts on human Nav1.6/SCN8A voltage-gated sodium channels. In vivo, is lethal to mice 40 minutes after intraperitoneal injection at a dose of 5ug. No activity is observed when injected into crickets or woodlice. The chain is Beta-mammal toxin Co1 from Centruroides ornatus (Scorpion).